Here is a 277-residue protein sequence, read N- to C-terminus: NADPH-dependent 7-cyano-7-deazaguanine reductase (277 aa).

Isoleucine 83–serine 85 serves as a coordination point for substrate. Serine 85–lysine 86 is an NADPH binding site. Catalysis depends on cysteine 184, which acts as the Thioimide intermediate. The active-site Proton donor is aspartate 191. Residue histidine 223–glutamate 224 coordinates substrate. Arginine 252–glycine 253 contributes to the NADPH binding site.

It belongs to the GTP cyclohydrolase I family. QueF type 2 subfamily. In terms of assembly, homodimer.

The protein resides in the cytoplasm. It carries out the reaction 7-aminomethyl-7-carbaguanine + 2 NADP(+) = 7-cyano-7-deazaguanine + 2 NADPH + 3 H(+). It participates in tRNA modification; tRNA-queuosine biosynthesis. Its function is as follows. Catalyzes the NADPH-dependent reduction of 7-cyano-7-deazaguanine (preQ0) to 7-aminomethyl-7-deazaguanine (preQ1). This Cupriavidus pinatubonensis (strain JMP 134 / LMG 1197) (Cupriavidus necator (strain JMP 134)) protein is NADPH-dependent 7-cyano-7-deazaguanine reductase.